The primary structure comprises 271 residues: Tryptophan synthase alpha chain (271 aa).

Catalysis depends on proton acceptor residues Glu49 and Asp60.

Belongs to the TrpA family. In terms of assembly, tetramer of two alpha and two beta chains.

It carries out the reaction (1S,2R)-1-C-(indol-3-yl)glycerol 3-phosphate + L-serine = D-glyceraldehyde 3-phosphate + L-tryptophan + H2O. It functions in the pathway amino-acid biosynthesis; L-tryptophan biosynthesis; L-tryptophan from chorismate: step 5/5. Functionally, the alpha subunit is responsible for the aldol cleavage of indoleglycerol phosphate to indole and glyceraldehyde 3-phosphate. The protein is Tryptophan synthase alpha chain of Yersinia pestis bv. Antiqua (strain Angola).